The sequence spans 314 residues: DNA-directed RNA polymerase subunit alpha (314 aa).

An alpha N-terminal domain (alpha-NTD) region spans residues methionine 1–threonine 228. The alpha C-terminal domain (alpha-CTD) stretch occupies residues lysine 245–glutamate 314.

Belongs to the RNA polymerase alpha chain family. In terms of assembly, homodimer. The RNAP catalytic core consists of 2 alpha, 1 beta, 1 beta' and 1 omega subunit. When a sigma factor is associated with the core the holoenzyme is formed, which can initiate transcription.

It catalyses the reaction RNA(n) + a ribonucleoside 5'-triphosphate = RNA(n+1) + diphosphate. Functionally, DNA-dependent RNA polymerase catalyzes the transcription of DNA into RNA using the four ribonucleoside triphosphates as substrates. The sequence is that of DNA-directed RNA polymerase subunit alpha from Shouchella clausii (strain KSM-K16) (Alkalihalobacillus clausii).